A 668-amino-acid chain; its full sequence is Bifunctional polymyxin resistance protein ArnA (668 aa).

The tract at residues M1 to L307 is formyltransferase ArnAFT. Catalysis depends on H106, which acts as the Proton donor; for formyltransferase activity. Residues R116 and V138–D142 each bind (6R)-10-formyltetrahydrofolate. Positions R317 to R668 are dehydrogenase ArnADH. Residues D350 and D371–I372 contribute to the NAD(+) site. Residues A396, Y401, and T435–S436 each bind UDP-alpha-D-glucuronate. E437 functions as the Proton acceptor; for decarboxylase activity in the catalytic mechanism. UDP-alpha-D-glucuronate contacts are provided by residues R463, N494, R528–R537, and Y615. R621 acts as the Proton donor; for decarboxylase activity in catalysis.

In the N-terminal section; belongs to the Fmt family. UDP-L-Ara4N formyltransferase subfamily. It in the C-terminal section; belongs to the NAD(P)-dependent epimerase/dehydratase family. UDP-glucuronic acid decarboxylase subfamily. In terms of assembly, homohexamer, formed by a dimer of trimers.

The catalysed reaction is UDP-alpha-D-glucuronate + NAD(+) = UDP-beta-L-threo-pentopyranos-4-ulose + CO2 + NADH. It carries out the reaction UDP-4-amino-4-deoxy-beta-L-arabinose + (6R)-10-formyltetrahydrofolate = UDP-4-deoxy-4-formamido-beta-L-arabinose + (6S)-5,6,7,8-tetrahydrofolate + H(+). It functions in the pathway nucleotide-sugar biosynthesis; UDP-4-deoxy-4-formamido-beta-L-arabinose biosynthesis; UDP-4-deoxy-4-formamido-beta-L-arabinose from UDP-alpha-D-glucuronate: step 1/3. Its pathway is nucleotide-sugar biosynthesis; UDP-4-deoxy-4-formamido-beta-L-arabinose biosynthesis; UDP-4-deoxy-4-formamido-beta-L-arabinose from UDP-alpha-D-glucuronate: step 3/3. The protein operates within bacterial outer membrane biogenesis; lipopolysaccharide biosynthesis. Bifunctional enzyme that catalyzes the oxidative decarboxylation of UDP-glucuronic acid (UDP-GlcUA) to UDP-4-keto-arabinose (UDP-Ara4O) and the addition of a formyl group to UDP-4-amino-4-deoxy-L-arabinose (UDP-L-Ara4N) to form UDP-L-4-formamido-arabinose (UDP-L-Ara4FN). The modified arabinose is attached to lipid A and is required for resistance to polymyxin and cationic antimicrobial peptides. The sequence is that of Bifunctional polymyxin resistance protein ArnA from Pseudomonas fluorescens (strain ATCC BAA-477 / NRRL B-23932 / Pf-5).